The chain runs to 1465 residues: Transcriptional elongation regulator MINIYO (1465 aa).

Disordered stretches follow at residues 27–85, 186–211, and 1113–1135; these read KGIS…AEER, LNAS…ESDI, and TIHE…SSTI.

The protein belongs to the RPAP1 family. In terms of assembly, interacts with HAG3, NRPB3 and NRPB10L. In terms of tissue distribution, expressed in root and shoot apices and in leaf and flower primordia. Detected in the endosperm, embryo, meristems and in organ primordia, but not in mature cells. Found exclusively in the vascular bundles in mature leaves.

The protein localises to the cytoplasm. It is found in the nucleus. Its function is as follows. Positive regulator of transcriptional elongation that is essential for cells to initiate differentiation. Interacts with RNA polymerase II and the Elongator complex and is required to sustain global levels of transcriptional elongation activity, specifically in differentiating tissues. This chain is Transcriptional elongation regulator MINIYO, found in Arabidopsis thaliana (Mouse-ear cress).